Here is a 322-residue protein sequence, read N- to C-terminus: MYSHLSFMDKVKLEQLLLSKIFLKKNGEQNISAIAKYLNRHRSTILREIKRFKTIDEYSAYKSDKMYYEKRKKNNKRFKFTEEQLNFIHLRFNVYHDSPSELIYRYFLKFKVKFPVCVKTLYKWIRLGFYGFLKQNLRHHGKKYKRKGKSDNRGKLTDFKSIWDIDNKVSNVGWLEMDTVVGKDHKSAILVLVEQLSKKYFAIKLENHTAREVEKKFKDIIIKNNLIGKIKGIITDRRKEFSKWREMEIFAETQVYFCDAGSPQQKPLIEYMNSELRHWFPKGTDFNKVSQKQIDWVVNVINDKLRPCLNWISSKEMFLQNI.

In terms of domain architecture, Integrase catalytic spans 153-322 (RGKLTDFKSI…SSKEMFLQNI (170 aa)).

This sequence belongs to the plectrovirus integrase ORF3 family.

This protein may encode an integrase, which is necessary for integration of the viral DNA into host genome. This is Putative integrase ORF3 from Spiroplasma virus SpV1-R8A2 B (SpV1).